The following is a 217-amino-acid chain: Somatotropin (217 aa).

The signal sequence occupies residues 1-27 (MMAAGPRTSLLLAFTLLCLPWTQVVGA). Residue His46 coordinates Zn(2+). The cysteines at positions 79 and 190 are disulfide-linked. A Phosphoserine modification is found at Ser132. Glu199 contributes to the Zn(2+) binding site. A disulfide bridge links Cys207 with Cys215.

This sequence belongs to the somatotropin/prolactin family.

It is found in the secreted. Functionally, plays an important role in growth control. Its major role in stimulating body growth is to stimulate the liver and other tissues to secrete IGF1. It stimulates both the differentiation and proliferation of myoblasts. It also stimulates amino acid uptake and protein synthesis in muscle and other tissues. The sequence is that of Somatotropin (GH1) from Capra hircus (Goat).